Here is a 1384-residue protein sequence, read N- to C-terminus: ABC transporter C family member 2 (1384 aa).

The ABC transmembrane type-1 1 domain occupies 104–388 (NKISVATKIF…LPEAIHRALS (285 aa)). A run of 5 helical transmembrane segments spans residues 112-132 (IFVAIVSILSPLCLKYFIYYI), 140-160 (TFKFGFLLCVLLFLSSLSLTL), 226-246 (IFVFPFQILALLILLCWIVGL), 247-267 (SGLVGFGVMVVSIPLCTFLST), and 333-353 (MITQVTSALVLVATFSTYALT). The 220-residue stretch at 505 to 724 (IEYDGAVQPS…GIDFESIMKT (220 aa)) folds into the ABC transporter 1 domain. An ATP-binding site is contributed by 537–544 (GIVGSGKT). Positions 729–756 (IDENDQSSTSTTDKKSSTSSSSSELKKS) are disordered. Positions 735–756 (SSTSTTDKKSSTSSSSSELKKS) are enriched in low complexity. A run of 5 helical transmembrane segments spans residues 813-833 (LFFLTCALYFISQIIFQLSDF), 852-872 (ILYYCIFIGAFIVFLVVRYFM), 941-961 (LFMMIYITPLISIPFAILVVV), 1036-1056 (GIRLEFITALIVFFTAFSSLF), and 1061-1081 (GFSVLAVTTALGICSYLNWTI). The ABC transmembrane type-1 2 domain maps to 814–1093 (FFLTCALYFI…MTELEVKMNS (280 aa)). Residues 1137–1371 (VEFKNVEIKY…EGSRFKKLVK (235 aa)) enclose the ABC transporter 2 domain. 1171–1178 (GRTGAGKS) contributes to the ATP binding site.

The protein belongs to the ABC transporter superfamily. ABCC family. Conjugate transporter (TC 3.A.1.208) subfamily.

The protein resides in the membrane. This Dictyostelium discoideum (Social amoeba) protein is ABC transporter C family member 2 (abcC2).